We begin with the raw amino-acid sequence, 570 residues long: Sulfite reductase [NADPH] hemoprotein beta-component (570 aa).

[4Fe-4S] cluster contacts are provided by cysteine 434, cysteine 440, cysteine 479, and cysteine 483. Cysteine 483 is a binding site for siroheme.

This sequence belongs to the nitrite and sulfite reductase 4Fe-4S domain family. In terms of assembly, alpha(8)-beta(8). The alpha component is a flavoprotein, the beta component is a hemoprotein. Requires siroheme as cofactor. [4Fe-4S] cluster is required as a cofactor.

The catalysed reaction is hydrogen sulfide + 3 NADP(+) + 3 H2O = sulfite + 3 NADPH + 4 H(+). It participates in sulfur metabolism; hydrogen sulfide biosynthesis; hydrogen sulfide from sulfite (NADPH route): step 1/1. In terms of biological role, component of the sulfite reductase complex that catalyzes the 6-electron reduction of sulfite to sulfide. This is one of several activities required for the biosynthesis of L-cysteine from sulfate. The protein is Sulfite reductase [NADPH] hemoprotein beta-component of Cronobacter sakazakii (strain ATCC BAA-894) (Enterobacter sakazakii).